The sequence spans 292 residues: MADKLFSIRNYFFLGSYQSCIGEALKFSSKNEEEKQEKDVYLYRSYIAQGQAFIPLKEIPAATKSADLAAVRRYAEFRNNPAAKKKILAEVQEEVASRNIKSEIAAVLAATILNEADLSQDAFRAVSRFEGLEARASKVFILIKMNKRKLAIGEVKKMNQIDEDATLSQLANALVTSFGASGKVKDALYIYSEMSDKYGRTTDLEMHQAVVSILTQDYAAAEELLESALERDNKDADVLINSIVSAQLNEKDDDVVERFISQLKHEHPNHPWVIDFNEKEAEFDRVASDSRA.

Belongs to the COPE family. In terms of assembly, oligomeric complex that consists of at least the alpha, beta, beta', gamma, delta, epsilon and zeta subunits.

The protein localises to the cytoplasm. Its subcellular location is the golgi apparatus membrane. The protein resides in the cytoplasmic vesicle. It localises to the COPI-coated vesicle membrane. Its function is as follows. The coatomer is a cytosolic protein complex that binds to dilysine motifs and reversibly associates with Golgi non-clathrin-coated vesicles, which further mediate biosynthetic protein transport from the ER, via the Golgi up to the trans Golgi network. The coatomer complex is required for budding from Golgi membranes, and is essential for the retrograde Golgi-to-ER transport of dilysine-tagged proteins. This Caenorhabditis elegans protein is Coatomer subunit epsilon (cope-1).